The chain runs to 73 residues: Large ribosomal subunit protein uL29 (73 aa).

This sequence belongs to the universal ribosomal protein uL29 family.

The protein is Large ribosomal subunit protein uL29 (rpmC) of Synechocystis sp. (strain ATCC 27184 / PCC 6803 / Kazusa).